We begin with the raw amino-acid sequence, 190 residues long: Pyridoxal 5'-phosphate synthase subunit PdxT (190 aa).

46-48 is a binding site for L-glutamine; sequence GES. Cys78 (nucleophile) is an active-site residue. L-glutamine-binding positions include Arg108 and 137 to 138; that span reads IR. Catalysis depends on charge relay system residues His174 and Glu176.

This sequence belongs to the glutaminase PdxT/SNO family. As to quaternary structure, in the presence of PdxS, forms a dodecamer of heterodimers. Only shows activity in the heterodimer.

It carries out the reaction aldehydo-D-ribose 5-phosphate + D-glyceraldehyde 3-phosphate + L-glutamine = pyridoxal 5'-phosphate + L-glutamate + phosphate + 3 H2O + H(+). The enzyme catalyses L-glutamine + H2O = L-glutamate + NH4(+). Its pathway is cofactor biosynthesis; pyridoxal 5'-phosphate biosynthesis. Its function is as follows. Catalyzes the hydrolysis of glutamine to glutamate and ammonia as part of the biosynthesis of pyridoxal 5'-phosphate. The resulting ammonia molecule is channeled to the active site of PdxS. In Chloroflexus aggregans (strain MD-66 / DSM 9485), this protein is Pyridoxal 5'-phosphate synthase subunit PdxT.